The sequence spans 194 residues: Cytochrome b-245 light chain (194 aa).

At 2–7 (GQIEWA) the chain is on the cytoplasmic side. A helical transmembrane segment spans residues 8–30 (MWANEQALASGLILVAGGIVATA). Over 31–35 (GRFTQ) the chain is Extracellular. A helical transmembrane segment spans residues 36-53 (WYFGTYAIAAGVLVCLLE). Topologically, residues 54 to 69 (YPRGSRAKGSTLERCG) are cytoplasmic. The stretch at 70-80 (QRYLTAVLKLL) is an intramembrane region. Residues 81–86 (GPLSRN) lie on the Cytoplasmic side of the membrane. Residues 87–104 (YYFRAALHLALSVPAGFL) traverse the membrane as a helical segment. Leu105 is a topological domain (extracellular). The chain crosses the membrane as a helical span at residues 106–126 (ATILGTVCLVIASIIYLLAAV). Topologically, residues 127 to 194 (RGEQWTPIEP…NPIPVTDEVV (68 aa)) are cytoplasmic. The disordered stretch occupies residues 134-194 (IEPRPKERPQ…NPIPVTDEVV (61 aa)). Thr147 bears the Phosphothreonine mark. Lys149 is covalently cross-linked (Glycyl lysine isopeptide (Lys-Gly) (interchain with G-Cter in ubiquitin)).

This sequence belongs to the p22phox family. As to quaternary structure, component of the phagocyte NADPH oxidase core complex/cytochrome b558 complex, composed of CYBB (heavy chain (beta)) and CYBA (light chain (alpha)). Component of the phagocyte NADPH oxidase complex composed of an obligatory core heterodimer formed by the membrane proteins CYBA and CYBB and the cytosolic regulatory subunits NCF1/p47-phox, NCF2/p67-phox, NCF4/p40-phox and the small GTPase RAC1 or RAC2. Interacts with NCF1 (via SH3 domain). Interacts with SH3PXD2A. Interacts with DUOX1, DUOX2 and TPO. Interacts with NOX4; this interaction mediates superoxide generation. Interacts with calprotectin (S100A8/9). Interacts with GBP7. Interacts with NOXO1. Forms a heterodimer with NOX3 and is essential for activity and cell membrane localization of NOX3. Interacts with NOX1. In terms of processing, phosphorylation at Thr-147 enhances NADPH oxidase activity by promoting NCF1/p47-phox binding. Post-translationally, ubiquitinated at Lys-149 likely by RNF145.

The protein localises to the cell membrane. Its function is as follows. Subunit of NADPH oxidase complexes that is required for the NADPH oxidase activity that generates, in various cell types, superoxide from molecular oxygen utilizing NADPH as an electron donor. Subunit of the phagocyte NADPH oxidase complex that mediates the transfer of electrons from cytosolic NADPH to O2 to produce the superoxide anion (O2(-)). In the activated complex, electrons are first transferred from NADPH to flavin adenine dinucleotide (FAD) and subsequently transferred via two heme molecules to molecular oxygen, producing superoxide through an outer-sphere reaction. Activation of the NADPH oxidase complex is initiated by the assembly of cytosolic subunits of the NADPH oxidase complex with the core NADPH oxidase complex to form a complex at the plasma membrane or phagosomal membrane. This activation process is initiated by phosphorylation dependent binding of the cytosolic NCF1/p47-phox subunit to the C-terminus of CYBA/p22-phox. Aassociates with NOX3 to form a functional NADPH oxidase constitutively generating superoxide. In Oryctolagus cuniculus (Rabbit), this protein is Cytochrome b-245 light chain.